The following is a 394-amino-acid chain: Elongation factor Tu (394 aa).

The tr-type G domain maps to 10 to 204 (KPHVNIGTIG…AVDSYIPQPI (195 aa)). The G1 stretch occupies residues 19–26 (GHVDHGKT). 19–26 (GHVDHGKT) provides a ligand contact to GTP. Threonine 26 contributes to the Mg(2+) binding site. Residues 60–64 (GITIS) form a G2 region. The G3 stretch occupies residues 81-84 (DCPG). Residues 81–85 (DCPGH) and 136–139 (NKVD) contribute to the GTP site. A G4 region spans residues 136-139 (NKVD). Residues 174–176 (SAL) are G5.

It belongs to the TRAFAC class translation factor GTPase superfamily. Classic translation factor GTPase family. EF-Tu/EF-1A subfamily. In terms of assembly, monomer.

Its subcellular location is the cytoplasm. The catalysed reaction is GTP + H2O = GDP + phosphate + H(+). In terms of biological role, GTP hydrolase that promotes the GTP-dependent binding of aminoacyl-tRNA to the A-site of ribosomes during protein biosynthesis. The polypeptide is Elongation factor Tu (Rickettsia typhi (strain ATCC VR-144 / Wilmington)).